Reading from the N-terminus, the 357-residue chain is Peptide chain release factor 1 (357 aa).

N5-methylglutamine is present on Gln234.

The protein belongs to the prokaryotic/mitochondrial release factor family. In terms of processing, methylated by PrmC. Methylation increases the termination efficiency of RF1.

Its subcellular location is the cytoplasm. Its function is as follows. Peptide chain release factor 1 directs the termination of translation in response to the peptide chain termination codons UAG and UAA. In Chlorobaculum tepidum (strain ATCC 49652 / DSM 12025 / NBRC 103806 / TLS) (Chlorobium tepidum), this protein is Peptide chain release factor 1.